The following is a 327-amino-acid chain: 2-keto-3-deoxygluconate permease (327 aa).

Transmembrane regions (helical) follow at residues 10–30 (IPGG…TFSP), 42–62 (GMIT…GASI), 73–93 (KSGT…AIAS), 95–115 (IIPE…LALV), 139–159 (AGAF…IILG), 163–183 (IASF…VGFA), 199–219 (VQTL…LTVI), 224–244 (LLGI…LIIA), 254–274 (TAGI…VLIA), and 289–309 (SLVA…TSIW).

It belongs to the KdgT transporter family.

It is found in the cell inner membrane. The enzyme catalyses 2-dehydro-3-deoxy-D-gluconate(in) + H(+)(in) = 2-dehydro-3-deoxy-D-gluconate(out) + H(+)(out). Functionally, catalyzes the proton-dependent uptake of 2-keto-3-deoxygluconate (KDG) into the cell. The sequence is that of 2-keto-3-deoxygluconate permease from Escherichia coli O157:H7.